Reading from the N-terminus, the 496-residue chain is Fibronectin type III and SPRY domain-containing protein 1 (496 aa).

Positions 4–99 (QKEALRKIIT…ALESSEELLE (96 aa)) form a coiled coil. One can recognise a COS domain in the interval 105 to 162 (LLATDSKDFPQAAKQIKDGVTMAPAFRLSLKAKVSDNMSHLMVDFAQERRMLQALTFL). Residues 164–268 (VPSAPVIDLT…EPVTLETPAF (105 aa)) enclose the Fibronectin type-III domain. In terms of domain architecture, B30.2/SPRY spans 268 to 477 (FMFRLDASTS…VTTGLQVPSS (210 aa)). Residues 301-336 (KAREKDGKGRTASPVNSPARGTPSPKRMPSGRGGRD) form a disordered region. Omega-N-methylarginine is present on residues arginine 310 and arginine 320.

As to quaternary structure, oligomerization is required for binding to microtubules.

The protein resides in the cytoplasm. It is found in the cytoskeleton. Its subcellular location is the microtubule organizing center. The protein localises to the centrosome. It localises to the nucleus. The protein resides in the cleavage furrow. Functionally, may be involved in microtubule organization and stabilization. In Bos taurus (Bovine), this protein is Fibronectin type III and SPRY domain-containing protein 1 (FSD1).